Here is a 258-residue protein sequence, read N- to C-terminus: CDP-diacylglycerol pyrophosphatase (258 aa).

The chain crosses the membrane as a helical span at residues 10–30 (YLLTLLILIILAAGLIYKLRF).

It belongs to the Cdh family.

It localises to the cell inner membrane. It catalyses the reaction a CDP-1,2-diacyl-sn-glycerol + H2O = a 1,2-diacyl-sn-glycero-3-phosphate + CMP + 2 H(+). Its pathway is phospholipid metabolism; CDP-diacylglycerol degradation; phosphatidate from CDP-diacylglycerol: step 1/1. The chain is CDP-diacylglycerol pyrophosphatase (cdh) from Yersinia pestis.